Consider the following 310-residue polypeptide: Proline iminopeptidase (310 aa).

One can recognise an AB hydrolase-1 domain in the interval 41 to 288 (LVTLHGGPGG…NSSHMAMWEE (248 aa)). The active-site Nucleophile is Ser-116. Asp-255 is a catalytic residue. The Proton donor role is filled by His-282.

It belongs to the peptidase S33 family. Part of the tricorn proteolytic complex.

It carries out the reaction Release of N-terminal proline from a peptide.. Functionally, cleaves H-Pro-AMC as well as a wide spectrum of amino acid substrates and several peptide substrates without a proline at the N-terminus. In conjunction with the three factors F1, F2 and F3, Tricorn degrades oligopeptides in a sequential manner, yielding free amino acids. This Saccharolobus solfataricus (strain ATCC 35092 / DSM 1617 / JCM 11322 / P2) (Sulfolobus solfataricus) protein is Proline iminopeptidase (pip).